Here is a 412-residue protein sequence, read N- to C-terminus: Pyruvate dehydrogenase E1 component subunit alpha, mitochondrial (412 aa).

11 residues coordinate pyruvate: H104, Y130, R131, A169, G177, V179, D208, G209, A210, N237, and Y239. Y130 and R131 together coordinate thiamine diphosphate. Residues G177, V179, D208, G209, A210, and N237 each contribute to the thiamine diphosphate site. D208 lines the Mg(2+) pocket. 2 residues coordinate Mg(2+): N237 and Y239. Position 304 (H304) interacts with thiamine diphosphate.

In terms of assembly, tetramer of 2 alpha and 2 beta subunits. The cofactor is thiamine diphosphate. It depends on Mg(2+) as a cofactor.

It localises to the mitochondrion matrix. The enzyme catalyses N(6)-[(R)-lipoyl]-L-lysyl-[protein] + pyruvate + H(+) = N(6)-[(R)-S(8)-acetyldihydrolipoyl]-L-lysyl-[protein] + CO2. With respect to regulation, E1 activity is regulated by phosphorylation (inactivation) and dephosphorylation (activation) of the alpha subunit. In terms of biological role, the pyruvate dehydrogenase complex catalyzes the overall conversion of pyruvate to acetyl-CoA and CO(2). It contains multiple copies of three enzymatic components: pyruvate dehydrogenase (E1), dihydrolipoamide acetyltransferase (E2) and lipoamide dehydrogenase (E3). This is Pyruvate dehydrogenase E1 component subunit alpha, mitochondrial (PDA1) from Kluyveromyces lactis (strain ATCC 8585 / CBS 2359 / DSM 70799 / NBRC 1267 / NRRL Y-1140 / WM37) (Yeast).